Reading from the N-terminus, the 256-residue chain is Type III pantothenate kinase (256 aa).

ATP is bound at residue 6-13 (DVGNSNIV). Substrate-binding positions include Y100 and 107-110 (GADR). D109 functions as the Proton acceptor in the catalytic mechanism. K(+) is bound at residue D129. An ATP-binding site is contributed by T132. T184 provides a ligand contact to substrate.

This sequence belongs to the type III pantothenate kinase family. As to quaternary structure, homodimer. NH4(+) serves as cofactor. The cofactor is K(+).

The protein resides in the cytoplasm. The catalysed reaction is (R)-pantothenate + ATP = (R)-4'-phosphopantothenate + ADP + H(+). Its pathway is cofactor biosynthesis; coenzyme A biosynthesis; CoA from (R)-pantothenate: step 1/5. Catalyzes the phosphorylation of pantothenate (Pan), the first step in CoA biosynthesis. This Geotalea daltonii (strain DSM 22248 / JCM 15807 / FRC-32) (Geobacter daltonii) protein is Type III pantothenate kinase.